The following is a 2226-amino-acid chain: MSCSQNETAAAKVLETQRAQESGSENEETDSITDQSSQSKSIKSATQFSVQRSDTDGLRMRISAIRPTLGVVATKKPPKSRKMSTQDTESGCSEAKNRAVSKKVKVKRKKLASSSGISKSDKVSKSKKSQISAFSSDSEDDLPLKVHQQRAPRVLLSAIIQAAQSASKPTLDIGISSSDNELPNLVQAAIKRVESDTEDTTVEGSFRKAAKDKNLPQYQSTLLQDFMEKTQMLGQTVNAKLAEEKVAKAKEETLVQTAVPRKRRGRPKKVVPTVPAPGNSGPAINESADSGVISTTSTTQSTTPSPKMQNENAVPTGSLPIASSSKPKIDMAYLDKRMYATERVLYPPPRSKRRQNNKKTACSSSNKEELQLDPLWREIDVNKKFRLRSMSVGAASGTGASTTICSKVLAAKSGYVSDYGSVRHQRSSHNHNSGYKSDASCKSRYSTKSCMSRRSRAKSCGYRSDCKESGKSGLRMRRKRRASMLLKSSADDTVEDQDILQLAGLSLGQSSEESNEYISKPSLKSLPTTSASKKYGEINRYVTTGQYFGRGGSLSATNPDNFISKMMNQRKETPAPSKSSCKIKSRRSSAASMCSSYVSGVSRMRRRHRRKSFSHNKSLNIDSKLLTEIEIITSTFNSRCRIQDDRLTGSSGKEKLLADANKLQATLAAPSPAQQLTLNGGGPASTLSKPLKRGLKKRKLSEPLVDFAMLSASASGTPNGSGSSNGNTKRRHKKSQSNDSSSPDDHKLPLKKRHYLLTPGERPPAEVAFANGKLNAEAWAAAAAAAKSTASTKSQAQFNARSVKSALTPKKRHLLEQPTSVSGAGSSASNSPLRIVVDNNSISGGKLLDISPSSLCSLKQQRRGGAAKQKVSAAKDLVQLQSPAGSYPPPGVFEPSVELEIQIPLSKLNESVITKAEVESPLLSALDIKEDTKKEVGQRVVETLLHKTGGNLLLKRKRKKINRTGFPTVRRKKRKVSVEQQTTAVIDEHEPEFDPDDEPLQSLRETRSSNNVNVQAAPNPPLDCERVPQAGEARETFVARTNQKAPRLSVVALERLQRPQTPARGRPRGRKPKNREQAEAAPQPPPKSEPEIRPAKKRGRQPKQPVLEEPPPTPPPQQKKNKMEPNIRLPDGIDPNTNFSCKIRLKRRKNLEAGTQPKKEKPVQPVTVEEIPPEIPVSQEEIDAEAEAKRLDSIPTEHDPLPASESHNPGPQDYASCSESSEDKASTTSLRKLSKVKKTYLVAGLFSNHYKQSLMPPPAKVNKKPGLEEQVGPASLLPPPPYCEKYLRRTEMDFELPYDIWWAYTNSKLPTRNVVPSWNYRKIRTNVYAESVRPNLAGFDHPTCNCKNQGEKSCLDNCLNRMVYTECSPSNCPAGEKCRNQKIQRHAVAPGVERFMTADKGWGVRTKLPIAKGTYILEYVGEVVTEKEFKQRMASIYLNDTHHYCLHLDGGLVIDGQRMGSDCRFVNHSCEPNCEMQKWSVNGLSRMVLFAKRAIEEGEELTYDYNFSLFNPSEGQPCRCNTPQCRGVIGGKSQRVKPLPAVEAKPSGEGLSGRNGRQRKQKAKKHAQRQAGKDISSAVAVAKLQPLSEKEKKLVRQFNTFLVRNFEKIRRCKAKRASDAAATASSPALGTTNGDIPGRRPSTPSSPSLAAQISALCSPRNIKTRGLTQAVHDPELEKMAKMAVVLRDICSAMETLKMSDLLTTVSSKKKKPIKTTLSGKLGSTAATSKVEFRSIQAQVEQGHYKTPQEFDDHMQQLFVEAKQQHGDDEGKEKALQSLKDSYEQQKIASYVQLVEILGDSESLQSFKPKEVLSSEEEPGKIAVKKSPGAKERDSPIVPLKVTPPPLLPIEASPDEDVIRCICGLYKDEGLMIQCSKCMVWQHTECTKADIDADNYQCERCEPREVDREIPLEEFTEEGHRYYLSLMRGDLQVRQGDAVYVLRDIPIKDESGKVLPTKKHTYETIGAIDYQECDIFRVEHLWKNELGKRFIFGHHFLRPHETFHEPSRRFYPNEVVRVSLYEVVPIELVIGRCWVLDRTTFCKGRPMECNDEDHCYICELRVDKTARFFSKAKANHPACTKSYAFRKFPEKIKISKSYAPHDVDPSLLKTRKQKTELDVGAGPTTMHKVSGRQEQHQAKMVGRKPRGISAPADATAVHVVTPVAPNKQMLKKRKSRLENVLITMKLKCLDAQTAQEQPIDLSYLLSGRGARQRKTQQSSSSSTANST.

A disordered region spans residues M1–K145. Residues I32–R52 are compositionally biased toward polar residues. Residues A99–L111 show a composition bias toward basic residues. Phosphoserine is present on residues S135, S136, and S138. 2 positions are modified to phosphothreonine: T200 and T201. Over residues P260–K269 the composition is skewed to basic residues. 5 disordered regions span residues P260–S324, R343–K367, A673–L695, S711–P749, and K811–P832. The segment at residues R261–T273 is a DNA-binding region (a.T hook 1). Residues S294–P306 show a composition bias toward low complexity. Polar residues predominate over residues K307–S324. Positions S711–N727 are enriched in low complexity. Phosphoserine is present on residues S740, S831, and S977. Over residues S820–S831 the composition is skewed to low complexity. Disordered stretches follow at residues Q980–R1026 and S1049–L1230. Positions H989–P999 are enriched in acidic residues. DNA-binding regions (a.T hook) lie at residues G1065–Q1077 and A1095–L1107. Residues E1108–Q1117 are compositionally biased toward pro residues. A compositionally biased stretch (basic and acidic residues) spans A1186 to P1200. A compositionally biased stretch (polar residues) spans E1205–E1219. One can recognise an AWS domain in the interval F1339 to A1387. The 117-residue stretch at P1390 to N1506 folds into the SET domain. A Post-SET domain is found at E1514–G1530. Disordered stretches follow at residues V1536–I1575 and R1616–S1648. Residues G1556–Q1568 show a composition bias toward basic residues. 2 stretches are compositionally biased toward low complexity: residues D1619–A1628 and R1639–S1648. In terms of domain architecture, Bromo spans K1681–S1789. The interval P1808 to L1839 is disordered. Residues V1857 to R1903 form a PHD-type zinc finger. A BAH domain is found at K1952–K2072. The disordered stretch occupies residues S2205–T2226. The segment covering T2214–T2226 has biased composition (low complexity).

Belongs to the class V-like SAM-binding methyltransferase superfamily. Histone-lysine methyltransferase family. SET2 subfamily. Component of a large multiprotein complex distinct from complexes containing ash2 or brm. Interacts (via SET domain) with trx (via SET domain). Interacts with nej/cbp. In terms of tissue distribution, expressed throughout development but is present at higher levels during the embryonic and pupal stages than during the larval stages. During the larval stages it accumulates primarily in imaginal disks.

Its subcellular location is the nucleus. The protein resides in the chromosome. The catalysed reaction is L-lysyl(4)-[histone H3] + 3 S-adenosyl-L-methionine = N(6),N(6),N(6)-trimethyl-L-lysyl(4)-[histone H3] + 3 S-adenosyl-L-homocysteine + 3 H(+). Its function is as follows. Trithorax group (TrxG) protein that has histone methyltransferase activity. Specifically trimethylates 'Lys-4' of histone H3 (H3K4me3), a specific tag for epigenetic transcriptional activation. TrxG proteins are generally required to maintain the transcriptionally active state of homeotic genes throughout development. Does not act as a coactivator required for transcriptional activation, but specifically prevents inappropriate Polycomb Group (PcG) silencing of homeotic genes in cells in which they must stay transcriptionally active. The chain is Histone-lysine N-methyltransferase ash1 (ash1) from Drosophila melanogaster (Fruit fly).